Here is a 257-residue protein sequence, read N- to C-terminus: MTLKLYSFGPGANSLKPLATLYEKGLEFEQVFVDPSKFEQHSDWFKKINPRGQVPALWHDGKVVTESTVICEYLEDVFPESGNSLRPADPFKRAEMRVWTKWVDEYFCWCVSTIGWAFGIKAIAQKMSDEEFEEHINKNVPIPEQQLKWRRARNGFPQEMLDEEFRKVGVSVARLEETLSKQDYLVDTGYSLADICNFAIANGLQRPGGFFGDYVNQEKTPGLCAWLDRINARPAIKEMFEKSKREDLLKRQNEKVA.

The GST N-terminal domain maps to 1 to 82 (MTLKLYSFGP…YLEDVFPESG (82 aa)). A GST C-terminal domain is found at 89–257 (DPFKRAEMRV…LLKRQNEKVA (169 aa)).

Belongs to the GST superfamily.

Lignin degradation enzyme. In Sphingobium sp. (strain NBRC 103272 / SYK-6), this protein is Protein LigF (ligF).